Reading from the N-terminus, the 208-residue chain is 3-demethoxyubiquinol 3-hydroxylase (208 aa).

Residues Glu-57, Glu-87, His-90, Glu-139, Glu-171, and His-174 each coordinate Fe cation.

This sequence belongs to the COQ7 family. The cofactor is Fe cation.

It localises to the cell membrane. It carries out the reaction a 5-methoxy-2-methyl-3-(all-trans-polyprenyl)benzene-1,4-diol + AH2 + O2 = a 3-demethylubiquinol + A + H2O. The protein operates within cofactor biosynthesis; ubiquinone biosynthesis. Functionally, catalyzes the hydroxylation of 2-nonaprenyl-3-methyl-6-methoxy-1,4-benzoquinol during ubiquinone biosynthesis. The sequence is that of 3-demethoxyubiquinol 3-hydroxylase from Burkholderia cenocepacia (strain HI2424).